Consider the following 176-residue polypeptide: Adenine phosphoribosyltransferase (176 aa).

Belongs to the purine/pyrimidine phosphoribosyltransferase family. Homodimer.

It is found in the cytoplasm. The enzyme catalyses AMP + diphosphate = 5-phospho-alpha-D-ribose 1-diphosphate + adenine. It functions in the pathway purine metabolism; AMP biosynthesis via salvage pathway; AMP from adenine: step 1/1. Catalyzes a salvage reaction resulting in the formation of AMP, that is energically less costly than de novo synthesis. The protein is Adenine phosphoribosyltransferase of Leuconostoc mesenteroides subsp. mesenteroides (strain ATCC 8293 / DSM 20343 / BCRC 11652 / CCM 1803 / JCM 6124 / NCDO 523 / NBRC 100496 / NCIMB 8023 / NCTC 12954 / NRRL B-1118 / 37Y).